A 156-amino-acid polypeptide reads, in one-letter code: MRCPFCGNIDTQVKDSRPAEDHVSIRRRRFCPACGGRFTTYERVQLRDLVVIKTSGKREDFDRDKLERSIRISMQKRPIDPERIDQMISGIVRRLESMGETDIPSKKIGEIVMEALARIDTVAYVRFASVYKNFQAADDFEDFVHELRPPSPPTEE.

A zinc finger spans residues 3–34; the sequence is CPFCGNIDTQVKDSRPAEDHVSIRRRRFCPAC. The ATP-cone domain occupies 49 to 139; the sequence is LVVIKTSGKR…VYKNFQAADD (91 aa).

Belongs to the NrdR family. Requires Zn(2+) as cofactor.

Functionally, negatively regulates transcription of bacterial ribonucleotide reductase nrd genes and operons by binding to NrdR-boxes. This chain is Transcriptional repressor NrdR, found in Ruegeria pomeroyi (strain ATCC 700808 / DSM 15171 / DSS-3) (Silicibacter pomeroyi).